A 769-amino-acid polypeptide reads, in one-letter code: Signal transducer and activator of transcription 3.1 (769 aa).

The Essential for nuclear import signature appears at 150–162; sequence DVRKKVQDLEQKM. One can recognise an SH2 domain in the interval 580–670; sequence WNEGYIMGFI…DATNILVSPL (91 aa). At S728 the chain carries Phosphoserine; by NLK.

It belongs to the transcription factor STAT family. Forms a homodimer or a heterodimer with a related family member, such as stat1. Interacts with nlk.2. In terms of processing, phosphorylation of both tyrosine and serine residues, together with dimerization, is required for mesoderm induction.

The protein resides in the cytoplasm. It localises to the nucleus. Its function is as follows. Transcription factor that binds to target promoter sequences and activates transcription upon il6st/gp130 stimulation. Mediates ventralization of embryos, at least in part via inhibition of smad2 signaling. Required for hairy2 to induce dll1/delta1 and promote neural crest cell proliferation and differentiation. Involved in TGFbeta-mediated mesoderm induction in early embryos, acting downstream of map3k7/tak1 and nlk.2. The chain is Signal transducer and activator of transcription 3.1 (stat3.1) from Xenopus laevis (African clawed frog).